A 442-amino-acid polypeptide reads, in one-letter code: ORC1-type DNA replication protein 8 (442 aa).

ATP contacts are provided by residues V66–A70 and Y218.

It belongs to the CDC6/cdc18 family.

Involved in regulation of DNA replication. The sequence is that of ORC1-type DNA replication protein 8 (cdc6h) from Haloarcula marismortui (strain ATCC 43049 / DSM 3752 / JCM 8966 / VKM B-1809) (Halobacterium marismortui).